The sequence spans 446 residues: Asparagine--tRNA ligase (446 aa).

It belongs to the class-II aminoacyl-tRNA synthetase family. In terms of assembly, homodimer.

It is found in the cytoplasm. The catalysed reaction is tRNA(Asn) + L-asparagine + ATP = L-asparaginyl-tRNA(Asn) + AMP + diphosphate + H(+). The chain is Asparagine--tRNA ligase from Sorangium cellulosum (strain So ce56) (Polyangium cellulosum (strain So ce56)).